Here is a 296-residue protein sequence, read N- to C-terminus: Bifunctional protein FolD 1 (296 aa).

NADP(+) contacts are provided by residues 167–169 (GCG) and I235.

This sequence belongs to the tetrahydrofolate dehydrogenase/cyclohydrolase family. In terms of assembly, homodimer.

The enzyme catalyses (6R)-5,10-methylene-5,6,7,8-tetrahydrofolate + NADP(+) = (6R)-5,10-methenyltetrahydrofolate + NADPH. It catalyses the reaction (6R)-5,10-methenyltetrahydrofolate + H2O = (6R)-10-formyltetrahydrofolate + H(+). It functions in the pathway one-carbon metabolism; tetrahydrofolate interconversion. In terms of biological role, catalyzes the oxidation of 5,10-methylenetetrahydrofolate to 5,10-methenyltetrahydrofolate and then the hydrolysis of 5,10-methenyltetrahydrofolate to 10-formyltetrahydrofolate. The chain is Bifunctional protein FolD 1 from Nocardioides sp. (strain ATCC BAA-499 / JS614).